The following is a 277-amino-acid chain: Sulfur carrier protein FdhD (277 aa).

Cys121 (cysteine persulfide intermediate) is an active-site residue. Phe260–Arg265 contributes to the Mo-bis(molybdopterin guanine dinucleotide) binding site.

Belongs to the FdhD family.

The protein resides in the cytoplasm. Functionally, required for formate dehydrogenase (FDH) activity. Acts as a sulfur carrier protein that transfers sulfur from IscS to the molybdenum cofactor prior to its insertion into FDH. The chain is Sulfur carrier protein FdhD from Escherichia coli O81 (strain ED1a).